Reading from the N-terminus, the 217-residue chain is MAAGDGDVKLSTLGSGGESGGDGSPGGAGATAARSSWVAALLATGGEMLLNVALVALVLLGAYRLWVRWGRRGLCSGPGAGEESPAATLPRMKKRDFSLEQLRQYDGARTPRILLAVNGKVFDVTKGSKFYGPAGPYGIFAGRDASRGLATFCLDKDALRDEYDDLSDLNAVQMESVREWEMQFKEKYDYVGRLLKPGEEPSEYTDEEDTKDHSKQD.

Ser-15 is a glycosylation site (O-linked (Xyl...) (chondroitin sulfate) serine). The chain crosses the membrane as a helical span at residues 40-62; sequence ALLATGGEMLLNVALVALVLLGA. A phosphoserine mark is found at Ser-84, Ser-98, and Ser-202. In terms of domain architecture, Cytochrome b5 heme-binding spans 96–195; it reads DFSLEQLRQY…EKYDYVGRLL (100 aa). A disordered region spans residues 196 to 217; sequence KPGEEPSEYTDEEDTKDHSKQD. The segment covering 200-209 has biased composition (acidic residues); it reads EPSEYTDEED. Phosphotyrosine is present on Tyr-204. A Phosphothreonine modification is found at Thr-205.

It belongs to the cytochrome b5 family. MAPR subfamily. Interacts with PGRMC1. Interacts with AAAS. Expressed in brown adipose tissue, white adipose tissue, liver, heart, skeletal muscle, brain and adrenal gland.

It is found in the membrane. The protein resides in the nucleus envelope. The protein localises to the endoplasmic reticulum. Its subcellular location is the secreted. Functionally, required for the maintenance of uterine histoarchitecture and normal female reproductive lifespan. May serve as a universal non-classical progesterone receptor in the uterus. Intracellular heme chaperone required for delivery of labile, or signaling heme, to the nucleus. Plays a role in adipocyte function and systemic glucose homeostasis. In brown fat, which has a high demand for heme, delivery of labile heme in the nucleus regulates the activity of heme-responsive transcriptional repressors such as NR1D1 and BACH1. The chain is Membrane-associated progesterone receptor component 2 from Mus musculus (Mouse).